The primary structure comprises 379 residues: Armadillo repeat-containing X-linked protein 3 (379 aa).

Residues 1–6 lie on the Mitochondrial intermembrane side of the membrane; sequence MGYARK. 2 mitochondrion outer membrane (MOM)-targeting sequence regions span residues 1–6 and 26–37; these read MGYARK and RLTRGRKQNKEK. The helical; Signal-anchor transmembrane segment at 7-29 threads the bilayer; it reads VGWVTAGLVIGAGACYCIYRLTR. Residues 30–379 are Cytoplasmic-facing; sequence GRKQNKEKMA…AEHMFPKSQE (350 aa). 3 positions are modified to phosphoserine: S61, S67, and S72. The segment at 89-98 is nuclear localization signal; that stretch reads RARARARARA. The span at 95–106 shows a compositional bias: basic residues; sequence RARATRARRAVQ. The interval 95-116 is disordered; sequence RARATRARRAVQKRASPNSDDT. S110 carries the post-translational modification Phosphoserine. ARM repeat units lie at residues 111–151, 153–192, and 233–272; these read PNSD…NNAA, AFNR…NLSV, and VTNE…NLAE.

The protein belongs to the eutherian X-chromosome-specific Armcx family. As to quaternary structure, interacts (via ARM domain) with MIRO1, MIRO2 and TRAK2. The interaction with Miro is calcium-dependent. Interacts with SOX10.

The protein localises to the mitochondrion outer membrane. Its subcellular location is the cytoplasm. It is found in the nucleus. Its function is as follows. Regulates mitochondrial aggregation and transport in axons in living neurons. May link mitochondria to the TRAK2-kinesin motor complex via its interaction with Miro and TRAK2. Mitochondrial distribution and dynamics is regulated through ARMCX3 protein degradation, which is promoted by PCK and negatively regulated by WNT1. Enhances the SOX10-mediated transactivation of the neuronal acetylcholine receptor subunit alpha-3 and beta-4 subunit gene promoters. The protein is Armadillo repeat-containing X-linked protein 3 (ARMCX3) of Homo sapiens (Human).